A 393-amino-acid polypeptide reads, in one-letter code: Elongation factor Tu (393 aa).

The 194-residue stretch at 10–203 (KPHVNIGTIG…AVDSYIPQPV (194 aa)) folds into the tr-type G domain. The tract at residues 19–26 (GHVDHGKT) is G1. Position 19-26 (19-26 (GHVDHGKT)) interacts with GTP. A Mg(2+)-binding site is contributed by Thr-26. Residues 60–64 (GITIS) form a G2 region. The interval 81 to 84 (DCPG) is G3. GTP-binding positions include 81-85 (DCPGH) and 136-139 (NKVD). Positions 136 to 139 (NKVD) are G4. Positions 173–175 (SAL) are G5.

It belongs to the TRAFAC class translation factor GTPase superfamily. Classic translation factor GTPase family. EF-Tu/EF-1A subfamily. As to quaternary structure, monomer.

It localises to the cytoplasm. The enzyme catalyses GTP + H2O = GDP + phosphate + H(+). In terms of biological role, GTP hydrolase that promotes the GTP-dependent binding of aminoacyl-tRNA to the A-site of ribosomes during protein biosynthesis. The protein is Elongation factor Tu of Chlorobaculum tepidum (strain ATCC 49652 / DSM 12025 / NBRC 103806 / TLS) (Chlorobium tepidum).